Consider the following 341-residue polypeptide: tRNA N6-adenosine threonylcarbamoyltransferase (341 aa).

Histidine 116 and histidine 120 together coordinate Fe cation. Residues 139–143 (LVSGG), aspartate 172, glycine 185, and asparagine 274 each bind substrate. Aspartate 302 is a binding site for Fe cation.

This sequence belongs to the KAE1 / TsaD family. Requires Fe(2+) as cofactor.

The protein localises to the cytoplasm. The enzyme catalyses L-threonylcarbamoyladenylate + adenosine(37) in tRNA = N(6)-L-threonylcarbamoyladenosine(37) in tRNA + AMP + H(+). Required for the formation of a threonylcarbamoyl group on adenosine at position 37 (t(6)A37) in tRNAs that read codons beginning with adenine. Is involved in the transfer of the threonylcarbamoyl moiety of threonylcarbamoyl-AMP (TC-AMP) to the N6 group of A37, together with TsaE and TsaB. TsaD likely plays a direct catalytic role in this reaction. This is tRNA N6-adenosine threonylcarbamoyltransferase from Vesicomyosocius okutanii subsp. Calyptogena okutanii (strain HA).